The sequence spans 217 residues: Probable GTP-binding protein EngB (217 aa).

One can recognise an EngB-type G domain in the interval 31–205 (VGVEIAFAGR…LAILDAWCHP (175 aa)). GTP-binding positions include 39–46 (GRSNAGKS), 66–70 (GRTQL), 84–87 (DLPG), 151–154 (TKAD), and 184–186 (FSA). S46 and T68 together coordinate Mg(2+).

Belongs to the TRAFAC class TrmE-Era-EngA-EngB-Septin-like GTPase superfamily. EngB GTPase family. Requires Mg(2+) as cofactor.

Its function is as follows. Necessary for normal cell division and for the maintenance of normal septation. In Shewanella amazonensis (strain ATCC BAA-1098 / SB2B), this protein is Probable GTP-binding protein EngB.